The chain runs to 529 residues: UDP-glucuronosyltransferase 2B7 (529 aa).

The N-terminal stretch at 1-23 (MSVKWTSVILLIQLSFCFSSGNC) is a signal peptide. Residues N67, N68, and N315 are each glycosylated (N-linked (GlcNAc...) asparagine). Residues 373 to 379 (THGGANG) and D398 contribute to the UDP-alpha-D-glucuronate site. The chain crosses the membrane as a helical span at residues 493-509 (VIGFLLVCVATVIFIVT).

It belongs to the UDP-glycosyltransferase family.

It localises to the endoplasmic reticulum membrane. The catalysed reaction is glucuronate acceptor + UDP-alpha-D-glucuronate = acceptor beta-D-glucuronoside + UDP + H(+). The enzyme catalyses 17alpha-estradiol + UDP-alpha-D-glucuronate = 17alpha-estradiol 17-O-(beta-D-glucuronate) + UDP + H(+). It catalyses the reaction 17beta-estradiol + UDP-alpha-D-glucuronate = 17beta-estradiol 17-O-(beta-D-glucuronate) + UDP + H(+). It carries out the reaction 2-hydroxy-17beta-estradiol + UDP-alpha-D-glucuronate = 2-hydroxy-17beta-estradiol 3-O-(beta-D-glucuronate) + UDP + H(+). The catalysed reaction is 4-hydroxy-17beta-estradiol + UDP-alpha-D-glucuronate = 17beta-estradiol 4-O-(beta-D-glucuronate) + UDP + H(+). The enzyme catalyses 4-hydroxyestrone + UDP-alpha-D-glucuronate = estrone 4-O-(beta-D-glucuronate) + UDP + H(+). It catalyses the reaction 16alpha-hydroxyestrone + UDP-alpha-D-glucuronate = 16alpha-hydroxyestrone 16-O-(beta-D-glucuronate) + UDP + H(+). It carries out the reaction 16alpha,17beta-estriol + UDP-alpha-D-glucuronate = 16alpha,17beta-estriol 16-O-(beta-D-glucuronate) + UDP + H(+). The catalysed reaction is 16beta,17beta-estriol + UDP-alpha-D-glucuronate = 16beta,17beta-estriol 16-O-(beta-D-glucuronate) + UDP + H(+). The enzyme catalyses 16alpha,17alpha-estriol + UDP-alpha-D-glucuronate = 16alpha,17alpha-estriol 16-O-(beta-D-glucuronate) + UDP + H(+). It catalyses the reaction 16alpha,17alpha-estriol + UDP-alpha-D-glucuronate = 16alpha,17alpha-estriol 17-O-(beta-D-glucuronate) + UDP + H(+). It carries out the reaction epitestosterone + UDP-alpha-D-glucuronate = epitestosterone 17-O-(beta-D-glucuronate) + UDP + H(+). The catalysed reaction is hyodeoxycholate + UDP-alpha-D-glucuronate = hyodeoxycholate 6-O-(beta-D-glucuronate) + UDP + H(+). The enzyme catalyses hyocholate + UDP-alpha-D-glucuronate = hyocholate 6-O-(beta-D-glucuronate) + UDP + H(+). It catalyses the reaction all-trans-retinoate + UDP-alpha-D-glucuronate = all-trans-retinoyl-1-O-(beta-D-glucuronate) + UDP. It carries out the reaction all-trans-4-hydroxyretinoate + UDP-alpha-D-glucuronate = all-trans-4-hydroxy-4-O-(beta-D-glucuronide)-retinoate + UDP + H(+). The catalysed reaction is (E)-ferulate + UDP-alpha-D-glucuronate = (E)-ferulic acid beta-D-glucuronate ester + UDP. The enzyme catalyses 8-iso-prostaglandin F2alpha + UDP-alpha-D-glucuronate = 8-iso-prostaglandin F2alpha-glucuronide + UDP + H(+). It catalyses the reaction 5-epi-5-F2t-IsoP + UDP-alpha-D-glucuronate = 5-epi-5-F2t-IsoP-glucuronide + UDP + H(+). It carries out the reaction (5Z,8Z,11Z,14Z)-eicosatetraenoate + UDP-alpha-D-glucuronate = O-[(5Z),(8Z),(11Z),(14Z)-eicosatetraenoyl]-beta-D-glucuronate + UDP. The catalysed reaction is 15-hydroxy-(5Z,8Z,11Z,13E)-eicosatetraenoate + UDP-alpha-D-glucuronate = 15-O-(beta-D-glucuronosyl)-(5Z,8Z,11Z,14Z)-eicosatetraenoate + UDP + H(+). The enzyme catalyses 20-hydroxy-(5Z,8Z,11Z,14Z)-eicosatetraenoate + UDP-alpha-D-glucuronate = 20-O-(beta-D-glucuronosyl)-(5Z,8Z,11Z,14Z)-eicosatetraenoate + UDP + H(+). It catalyses the reaction (E)-ferulate + UDP-alpha-D-glucuronate = (E)-4-O-(beta-D-glucuronosyl)-ferulate + UDP + H(+). It carries out the reaction prostaglandin B1 + UDP-alpha-D-glucuronate = 15-O-(beta-D-glucuronosyl)-prostaglandin B1 + UDP + H(+). The catalysed reaction is mycophenolate + UDP-alpha-D-glucuronate = mycophenolic acid O-acyl-beta-D-glucuronide + UDP. The enzyme catalyses losartan + UDP-alpha-D-glucuronate = losartan-2-N-beta-D-glucuronide + UDP. It catalyses the reaction candesartan + UDP-alpha-D-glucuronate = candesartan O-beta-D-glucuronoside + UDP. It carries out the reaction candesartan + UDP-alpha-D-glucuronate = candesartan-2-N-beta-D-glucuronide + UDP. The catalysed reaction is zolasartan + UDP-alpha-D-glucuronate = zolarsartan O-beta-D-glucuronoside + UDP. In terms of biological role, UDP-glucuronosyltransferase (UGT) that catalyzes phase II biotransformation reactions in which lipophilic substrates are conjugated with glucuronic acid to increase the metabolite's water solubility, thereby facilitating excretion into either the urine or bile. Essential for the elimination and detoxification of drugs, xenobiotics and endogenous compounds. Catalyzes the glucuronidation of endogenous steroid hormones such as androgens (epitestosterone, androsterone) and estrogens (estradiol, epiestradiol, estriol, catechol estrogens). Also regulates the levels of retinoic acid, a major metabolite of vitamin A involved in apoptosis, cellular growth and differentiation, and embryonic development. Contributes to bile acid (BA) detoxification by catalyzing the glucuronidation of BA substrates, which are natural detergents for dietary lipids absorption. Involved in the glucuronidation of arachidonic acid (AA) and AA-derived eicosanoids including 15-HETE, 20-HETE, PGE2, PGB1 and F2-isoprostanes (8-iso-PGF2alpha and 5-epi-5-F2t-IsoP). Involved in the glucuronidation of the phytochemical ferulic acid at the phenolic or the carboxylic acid group. Involved in the glucuronidation of the AGTR1 angiotensin receptor antagonist losartan, caderastan and zolarsatan, drugs which can inhibit the effect of angiotensin II. Also metabolizes mycophenolate, an immunosuppressive agent. This chain is UDP-glucuronosyltransferase 2B7, found in Homo sapiens (Human).